An 89-amino-acid polypeptide reads, in one-letter code: MACPLDQAIGLLVAIFHKYSGKEGDKHTLSKKELKELIQKELTIGAKLQDAEIARLMDDLDRNKDQEVNFQEYVAFLGALALIYNEALK.

2 consecutive EF-hand domains span residues 12-47 (LVAI…IGAK) and 48-83 (LQDA…LALI). Residues Thr28 and Glu33 each contribute to the Ca(2+) site. Lys40 is modified (N6-acetyllysine). Lys47 bears the N6-acetyllysine; alternate mark. Lys47 is subject to N6-succinyllysine; alternate. Positions 61, 63, 65, 67, and 72 each coordinate Ca(2+).

Belongs to the S-100 family. As to quaternary structure, homodimer; head to tail assembly of 2 subunits. Interacts with CACYBP in a calcium-dependent manner. Interacts with ANXA2 and ANXA11 (via N-terminus). Interacts with SUGT1. Interacts with TP53; has higher affinity for TP53 that is phosphorylated on its N-terminal domain, and lower affinity for TP53 that is phosphorylated on its C-terminal domain. Interacts with tropomyosin. Interacts with FKBP4. Interacts with PPP5C (via TPR repeats); the interaction is calcium-dependent and modulates PPP5C activity. Interacts with TPPP; this interaction inhibits TPPP dimerization.

It localises to the nucleus envelope. The protein resides in the cytoplasm. Its subcellular location is the cell membrane. May function as calcium sensor and modulator, contributing to cellular calcium signaling. May function by interacting with other proteins, such as TPR-containing proteins, and indirectly play a role in many physiological processes such as the reorganization of the actin cytoskeleton and in cell motility. Binds 2 calcium ions. Calcium binding is cooperative. The polypeptide is Protein S100-A6 (S100a6) (Rattus norvegicus (Rat)).